The chain runs to 258 residues: Bidirectional sugar transporter SWEET9 (258 aa).

The Extracellular segment spans residues 1–7 (MFLKVHE). Residues 8–28 (IAFLFGLLGNIVSFGVFLSPV) traverse the membrane as a helical segment. In terms of domain architecture, MtN3/slv 1 spans 10–96 (FLFGLLGNIV…FLYILYAPRE (87 aa)). Topologically, residues 29–42 (PTFYGIYKKKSSKG) are cytoplasmic. A helical transmembrane segment spans residues 43 to 63 (FQSIPYICALASATLLLYYGI). The Extracellular portion of the chain corresponds to 64 to 69 (MKTHAY). The helical transmembrane segment at 70–90 (LIISINTFGCFIEISYLFLYI) threads the bilayer. Over 91 to 103 (LYAPREAKISTLK) the chain is Cytoplasmic. Residues 104–124 (LIVICNIGGLGLLILLVNLLV) form a helical membrane-spanning segment. Over 125–131 (PKQHRVS) the chain is Extracellular. The chain crosses the membrane as a helical span at residues 132–152 (TVGWVCAAYSLAVFASPLSVM). The MtN3/slv 2 domain occupies 132-216 (TVGWVCAAYS…ILYMMYQGST (85 aa)). At 153 to 165 (RKVIKTKSVEYMP) the chain is on the cytoplasmic side. Residues 166–186 (FLLSLSLTLNAVMWFFYGLLI) form a helical membrane-spanning segment. At 187-189 (KDK) the chain is on the extracellular side. Residues 190-210 (FIAMPNILGFLFGVAQMILYM) form a helical membrane-spanning segment. Residues 211–258 (MYQGSTKTDLPTENQLANKTDVNEVPIVAVELPDVGSDNVEGSVRPMK) lie on the Cytoplasmic side of the membrane.

It belongs to the SWEET sugar transporter family. In terms of assembly, forms heterooligomers with SWEET1, SWEET5, SWEET8, SWEET11, SWEET13, SWEET16 and SWEET17. In terms of tissue distribution, specifically expressed in nectaries, mostly in the lower half of nectary parenchyma.

The protein resides in the cell membrane. It localises to the cytoplasmic vesicle membrane. Its subcellular location is the golgi apparatus. It is found in the trans-Golgi network membrane. Functionally, mediates both low-affinity uptake and efflux of sugar across the plasma membrane. Nectary-specific sugar transporter required for nectar production by mediating the secretion of sucrose from the nectary parenchyma to the extracellular space. This is Bidirectional sugar transporter SWEET9 from Arabidopsis thaliana (Mouse-ear cress).